Consider the following 414-residue polypeptide: FAD-dependent monooxygenase adaC (414 aa).

Residues E32, A43, R115, D325, and G338 each contribute to the FAD site.

It belongs to the paxM FAD-dependent monooxygenase family. FAD serves as cofactor.

The enzyme catalyses 3-(2,4-dioxopentyl)-3,6,8,9-tetrahydroxy-1-oxo-1,2,3,4-tetrahydroanthracene-2-carboxyl-[ACP] + NADPH + O2 + H(+) = 3-(2,4-dioxopentyl)-2,3,6,8,9-pentahydroxy-1-oxo-1,2,3,4-tetrahydroanthracene-2-carboxyl-[ACP] + NADP(+) + H2O. Its pathway is secondary metabolite biosynthesis. In terms of biological role, FAD-dependent monooxygenase; part of the gene cluster that mediates the biosynthesis of the linear tetracyclic TAN-1612 neuropeptide Y receptor antagonist. The decaketide backbone of TAN-1612 is synthesized by the non-reducing polyketide synthase adaA via condensation of one acetyl-CoA starter unit with 9 malonyl-CoA units. The FAD-dependent monooxygenase adaC then performs hydroxylation at C2 while the polaketide chain is still attached to the NRPKS adaA. The alpha-hydroxylation step at C2 appears to be crucial for the following C18-C1 Claisen cyclization and release of the C9-hydroxyl version of TAN-1612 from the NRPKS adaA, two steps performed by the lactamase-like protein adaB. Finally, the O-methyltransferase adaD performs the C9 O-methylation to complete the biosynthesis of TAN-1612. This Aspergillus niger (strain ATCC MYA-4892 / CBS 513.88 / FGSC A1513) protein is FAD-dependent monooxygenase adaC.